Reading from the N-terminus, the 1038-residue chain is Ubiquitin carboxyl-terminal hydrolase 36 (1038 aa).

2 disordered regions span residues 22-44 (LGGN…TNGS) and 107-148 (ANGH…PKPK). Over residues 23 to 44 (GGNSSAGSSTDQAKSGEDTNGS) the composition is skewed to polar residues. The region spanning 172-480 (TGMINVGNTC…NAYIMFFELD (309 aa)) is the USP domain. C181 (nucleophile) is an active-site residue. Catalysis depends on H439, which acts as the Proton acceptor. 4 disordered regions span residues 487–794 (PAAN…SKTG), 818–881 (GSPV…SNGS), 912–985 (LLVD…YNQN), and 1000–1038 (RFGG…QQQT). Composition is skewed to low complexity over residues 502-517 (STTP…PSPT), 546-559 (QQNQ…LQLG), and 587-606 (NGNK…KSIN). S513 and S515 each carry phosphoserine. Positions 629–641 (TTAQLPSMPNMTE) are enriched in polar residues. Phosphothreonine is present on residues T658 and T662. A phosphoserine mark is found at S672 and S674. The segment covering 703-728 (TNGHSKTNGSHTNGSASSSVHVNNSK) has biased composition (polar residues). Residues 729 to 746 (QKTDAIDEIFKSLKKSAD) show a composition bias toward basic and acidic residues. S747 carries the post-translational modification Phosphoserine. Residues 747 to 756 (SDEDDDEEEP) show a composition bias toward acidic residues. Residues 766–776 (PQKQSQSQSKA) show a composition bias toward low complexity. A compositionally biased stretch (pro residues) spans 777–786 (PPSPKTPPSP). Residue S779 is modified to Phosphoserine. T782 is subject to Phosphothreonine. Phosphoserine is present on residues S785 and S819. A Phosphothreonine modification is found at T825. Residues 832–844 (NPFSSSKPSTDSP) are compositionally biased toward polar residues. Phosphoserine is present on S843. T846 carries the phosphothreonine modification. Over residues 859-881 (ALKSHQQPRVGNGYQSNATSNGS) the composition is skewed to polar residues. The segment covering 912 to 923 (LLVDAREQRQRD) has biased composition (basic and acidic residues). Residues 942 to 953 (SGSAKGNNASNS) show a composition bias toward low complexity.

It belongs to the peptidase C19 family. Interacts with atms/PAF1, but not with CycT. Interacts (via C-terminus) with imd (via N-terminus).

The protein resides in the nucleus. Its subcellular location is the nucleolus. The protein localises to the cytoplasm. The enzyme catalyses Thiol-dependent hydrolysis of ester, thioester, amide, peptide and isopeptide bonds formed by the C-terminal Gly of ubiquitin (a 76-residue protein attached to proteins as an intracellular targeting signal).. Hydrolase that deubiquitinates polyubiquitinated target proteins including imd. Required for preventing the constitutive activation of the imd/NF-kappa-B (Imd) signaling cascade under unchalleneged conditions. Deubiquitinates imd linked 'Lys-63' chains which leads its proteasomal degradation and consequently down-regulation of the Imd signaling cascade. Removal of the activating 'Lys-63'-linked chains is likely to enable their replacement with 'Lys-48'-linked chains which act as 'tags' the for proteasomal degradation of imd. Required for maintaining multiple types of adult stem cells, including male and female germline, epithelial follicle cell and intestinal stem cells. May function as a transcriptional repressor by continually deubiquiting histone H2B at the promoters of genes critical for cellular differentiation, thereby preventing histone H3 'Lys-4' trimethylation (H3K4me3). Controls selective autophagy activation by ubiquitinated proteins. The sequence is that of Ubiquitin carboxyl-terminal hydrolase 36 (scny) from Drosophila melanogaster (Fruit fly).